Reading from the N-terminus, the 845-residue chain is Beta-mannosidase B (845 aa).

The segment at 1–20 (MSKLQQFPLSKGWSFRDSED) is disordered. Residue Asn-252 is glycosylated (N-linked (GlcNAc...) asparagine). The active-site Proton donor is Glu-432. Residues Asn-717 and Asn-723 are each glycosylated (N-linked (GlcNAc...) asparagine).

Belongs to the glycosyl hydrolase 2 family. Beta-mannosidase B subfamily.

It carries out the reaction Hydrolysis of terminal, non-reducing beta-D-mannose residues in beta-D-mannosides.. The protein operates within glycan metabolism; N-glycan degradation. Functionally, exoglycosidase that cleaves the single beta-linked mannose residue from the non-reducing end of beta-mannosidic oligosaccharides of various complexity and length. Prefers mannobiose over mannotriose and has no activity against polymeric mannan. Is also severely restricted by galactosyl substitutions at the +1 subsite. The polypeptide is Beta-mannosidase B (mndB) (Neosartorya fischeri (strain ATCC 1020 / DSM 3700 / CBS 544.65 / FGSC A1164 / JCM 1740 / NRRL 181 / WB 181) (Aspergillus fischerianus)).